Reading from the N-terminus, the 195-residue chain is Probable GTP-binding protein EngB (195 aa).

The EngB-type G domain occupies 22 to 195 (GRPEVALAGR…WAALLPFVAS (174 aa)). Residues 30–37 (GRSNVGKS), 57–61 (GKTQT), 75–78 (DVPG), 142–145 (TKAD), and 174–176 (FSA) contribute to the GTP site. Positions 37 and 59 each coordinate Mg(2+).

Belongs to the TRAFAC class TrmE-Era-EngA-EngB-Septin-like GTPase superfamily. EngB GTPase family. Mg(2+) serves as cofactor.

Necessary for normal cell division and for the maintenance of normal septation. In Geobacillus kaustophilus (strain HTA426), this protein is Probable GTP-binding protein EngB.